A 145-amino-acid polypeptide reads, in one-letter code: D-aminoacyl-tRNA deacylase (145 aa).

A Gly-cisPro motif, important for rejection of L-amino acids motif is present at residues 137–138 (GP).

The protein belongs to the DTD family. As to quaternary structure, homodimer.

Its subcellular location is the cytoplasm. It carries out the reaction glycyl-tRNA(Ala) + H2O = tRNA(Ala) + glycine + H(+). The catalysed reaction is a D-aminoacyl-tRNA + H2O = a tRNA + a D-alpha-amino acid + H(+). An aminoacyl-tRNA editing enzyme that deacylates mischarged D-aminoacyl-tRNAs. Also deacylates mischarged glycyl-tRNA(Ala), protecting cells against glycine mischarging by AlaRS. Acts via tRNA-based rather than protein-based catalysis; rejects L-amino acids rather than detecting D-amino acids in the active site. By recycling D-aminoacyl-tRNA to D-amino acids and free tRNA molecules, this enzyme counteracts the toxicity associated with the formation of D-aminoacyl-tRNA entities in vivo and helps enforce protein L-homochirality. This Pectobacterium carotovorum subsp. carotovorum (strain PC1) protein is D-aminoacyl-tRNA deacylase.